Consider the following 187-residue polypeptide: ATP synthase subunit b (187 aa).

A helical membrane pass occupies residues 36-53 (PYQWVSVAMLVLIAIMLW).

It belongs to the ATPase B chain family. As to quaternary structure, F-type ATPases have 2 components, F(1) - the catalytic core - and F(0) - the membrane proton channel. F(1) has five subunits: alpha(3), beta(3), gamma(1), delta(1), epsilon(1). F(0) has four main subunits: a(1), b(2) and c(10-14). The alpha and beta chains form an alternating ring which encloses part of the gamma chain. F(1) is attached to F(0) by a central stalk formed by the gamma and epsilon chains, while a peripheral stalk is formed by the delta and b chains.

It is found in the cell inner membrane. Functionally, f(1)F(0) ATP synthase produces ATP from ADP in the presence of a proton or sodium gradient. F-type ATPases consist of two structural domains, F(1) containing the extramembraneous catalytic core and F(0) containing the membrane proton channel, linked together by a central stalk and a peripheral stalk. During catalysis, ATP synthesis in the catalytic domain of F(1) is coupled via a rotary mechanism of the central stalk subunits to proton translocation. Component of the F(0) channel, it forms part of the peripheral stalk, linking F(1) to F(0). The sequence is that of ATP synthase subunit b from Erythrobacter litoralis (strain HTCC2594).